Consider the following 483-residue polypeptide: Pentatricopeptide repeat-containing protein At5g18950 (483 aa).

PPR repeat units follow at residues 144–178 (EPTL…GISS), 179–213 (SVVT…EFDS), 218–246 (CLIR…GLDP), 247–281 (GQYV…NHFP), 282–316 (SMYI…GYAP), 317–351 (DRVV…GMRP), 352–386 (NEFA…GYGG), 387–421 (TMLS…GVTP), and 422–456 (NAIT…GLKP).

Belongs to the PPR family. P subfamily.

In Arabidopsis thaliana (Mouse-ear cress), this protein is Pentatricopeptide repeat-containing protein At5g18950.